A 454-amino-acid chain; its full sequence is UDP-glycosyltransferase 79A2 (454 aa).

UDP-alpha-D-glucose contacts are provided by residues serine 269, 330–331, 348–356, and 370–373; these read WV, HAGYGSVIE, and KVDQ.

The protein belongs to the UDP-glycosyltransferase family.

Functionally, may glycosylate diterpenes or flavonols in leaves. This is UDP-glycosyltransferase 79A2 from Stevia rebaudiana (Stevia).